We begin with the raw amino-acid sequence, 756 residues long: Polyribonucleotide nucleotidyltransferase (756 aa).

Mg(2+) contacts are provided by Asp-532 and Asp-538. The region spanning 598–657 (PRVTAIKVPVDKIGEVIGPKGKMINSITEQTGANISIEDDGTVFVGATDGPSAQAAIDMI) is the KH domain. Residues 669 to 738 (GERFLGTVVK…ARGKISLIPV (70 aa)) enclose the S1 motif domain.

The protein belongs to the polyribonucleotide nucleotidyltransferase family. The cofactor is Mg(2+).

The protein resides in the cytoplasm. The catalysed reaction is RNA(n+1) + phosphate = RNA(n) + a ribonucleoside 5'-diphosphate. In terms of biological role, involved in mRNA degradation. Catalyzes the phosphorolysis of single-stranded polyribonucleotides processively in the 3'- to 5'-direction. This chain is Polyribonucleotide nucleotidyltransferase, found in Rhodococcus erythropolis (strain PR4 / NBRC 100887).